A 434-amino-acid polypeptide reads, in one-letter code: Ribosomal protein uS12 methylthiotransferase RimO (434 aa).

Residues 6–122 (SKLYLLTLGC…IIAELGGHYK (117 aa)) enclose the MTTase N-terminal domain. [4Fe-4S] cluster contacts are provided by C15, C51, C85, C146, C150, and C153. In terms of domain architecture, Radical SAM core spans 132-361 (LTPPYFSYLK…MAAQEEIAYA (230 aa)). Residues 364–434 (QALVGSFMPV…AFDLFGSLVL (71 aa)) enclose the TRAM domain.

Belongs to the methylthiotransferase family. RimO subfamily. [4Fe-4S] cluster serves as cofactor.

The protein localises to the cytoplasm. The catalysed reaction is L-aspartate(89)-[ribosomal protein uS12]-hydrogen + (sulfur carrier)-SH + AH2 + 2 S-adenosyl-L-methionine = 3-methylsulfanyl-L-aspartate(89)-[ribosomal protein uS12]-hydrogen + (sulfur carrier)-H + 5'-deoxyadenosine + L-methionine + A + S-adenosyl-L-homocysteine + 2 H(+). Functionally, catalyzes the methylthiolation of an aspartic acid residue of ribosomal protein uS12. This Chloroherpeton thalassium (strain ATCC 35110 / GB-78) protein is Ribosomal protein uS12 methylthiotransferase RimO.